The primary structure comprises 453 residues: Beta-agarase AgaB34 (453 aa).

The N-terminal stretch at 1-23 (MKGFTKHSILMACSIGLAINATA) is a signal peptide. One can recognise a GH16 domain in the interval 24-301 (ADWDNIPIPA…WIRVYKPTGG (278 aa)). E147 serves as the catalytic Nucleophile. E152 (proton donor) is an active-site residue. Residues 313-453 (PSGYTNLQLA…GATNQRFKFL (141 aa)) form the Ricin B-type lectin domain. Intrachain disulfides connect C327-C346, C375-C394, and C423-C442.

It belongs to the glycosyl hydrolase 16 family.

The protein resides in the secreted. The catalysed reaction is Hydrolysis of (1-&gt;4)-beta-D-galactosidic linkages in agarose, giving the tetramer as the predominant product.. The protein is Beta-agarase AgaB34 of Agarivorans albus.